Reading from the N-terminus, the 1873-residue chain is SAGA complex subunit Spt20 (1873 aa).

The protein belongs to the SPT20 family. As to quaternary structure, component of the Spt-Ada-Gcn5 acetyltransferase (SAGA) complex consisting of wda/Taf5L, Saf6, Taf9, Taf10b, Taf12, Ada1, Spt3, Spt7, Spt20, Sf3b3, Sf3b5, Nipped-A/Tra1, a histone acetyltransferase (HAT) module made up of Gcn5, Ada2b (Isoform B), Ada3 and Sgf29, and a deubiquitinase (DUB) module made up of not/nonstop, Sgf11 and e(y)2 tethered to SAGA by Atxn7.

The protein localises to the nucleus. Component of the transcription regulatory complex SAGA, a multiprotein complex that activates transcription by remodeling chromatin and mediating histone acetylation and deubiquitination. The SAGA complex predominantly acetylates histone H3. The sequence is that of SAGA complex subunit Spt20 from Drosophila melanogaster (Fruit fly).